The primary structure comprises 1478 residues: MELYPGVSPVGLLLLLLLGQGPSQIHGSSGENTLAWQSQQVFWTLKNFPFPCKPKKLELSVLSESVHSLRPSDIKLVAAIGNPEIPLAPGSGTINMEKPQSIKNQPQDVCMGIMTVLSDIIRHFSPSVLMPTCSPGKGTAVHTTAEDLWIQAKELVRRLKDNPQLDFEKDWKLITVFFSNTSQCHLCPSAQQKSHLMRHMEMLWGVLDYLHHEVPRAFVNLVDLSEVLAMDLQHQETGFSPAPEVCKCTETTTLSKAVMQWSYQEAWEDLLASSKFNKHETFAVVFQPFFDEIEPPLKRSSPQDPTTLALRIWNSMMEPVGQKDGLLNTAERKTMKCPSEESPYLFTYKNSNYQARRLKPITKLQMKEGSEFTCPDKNPSNSIPTTVHSLRPADIKIIGALGDSLTAGNGAGASPWNILDVLTEYRGLSWSVGGDETIKTVTTLPNILREFNPSLKGFSVGTGKESTSRASFNQAVAGAKSDGLAGQARKLVDLMKADKTINFQEDWKIITVFIGGNDLCASCSNSTRFSPQNFIDNIKNALDILHAEVPRAFVNMAMVMEITPLRELFNEPTVSCPRNILSRLCPCVLGLGDNSEELSSLVQRNRDYQKKTEELINSGRYDTRDNFTVVVQPLFENVSMPRTPEGVPDKSFFAPDCFHFNAKTHARSAIALWKNMLEPVGHKTRHNNFEIKAPIVCPNQASPFLSTTKNSNLGNGTWMVCEERAPSASPPTSVHTLRPADIQVVAALGDSLTAGNGISSQEGNLTDVSTQYRGLSYSAGGDKTLENVTTLPNILRKFNGNLTGYSVGTGDSSSANAFLNQAVPGAKAENLTSQVRTLVQKMKSDNRVNFNRDWKVITVMIGASDLCDFCTDSNHYSAANFFDHLQNALDILHKEVPRALVNLVDFINPSIIREVFLKNPDKCPVNQSSVLCNCVLTPRKDSYELARLEAFTKSYQSSMLQLVESGRYDTREDFSVVLQPFLLNTKLPVLENGKPDTSFFAPDCIHLNQKFHTQLARALWANMLEPLGKKTDTLDPKGHISLACPTKDQPFLRTFRNSNYKYPTKPAIENWGSDFLCTEKSPSSQVPTSVHELRPADIKVVAAMGDFLTTATGARPSGYKRLATPWRGLSWSIGGDGKLETHTTLPNILKKFNPSITGFSTGTLDNKAGLNVAEEGARAQDMPAQAKTLVKKMKSTPTINLQEDWKLITLLIGNNDLCLYCENPEDNSTKEYVKYIQQALDILYEELPRVFINVVEVMELAGLHHVQGGKCAMPLAVQKNCSCLRHSQNLTAMQELKKLNWNLQSGISELSYWHRYMEREDFAVTVQPFFRNTFIPLNEREGLDLTFFSEDCFYFSDRGHAEMAIALWNNMLEPVGWKTSSNNFIYNRTKLKCPSPERPFLYTLRNSQLLPDKAEEPSNALYWAVPVAAIGGLAVGILGVMLWRTVKPVQQEEEEEDTLPNTSVTQDAVSEKRLKAGN.

The first 27 residues, 1–27, serve as a signal peptide directing secretion; the sequence is MELYPGVSPVGLLLLLLLGQGPSQIHG. The Extracellular segment spans residues 28–1422; sequence SSGENTLAWQ…KAEEPSNALY (1395 aa). Tandem repeats lie at residues 43-351, 366-711, 712-1058, and 1068-1407. A 4 X 308-326 AA approximate repeats region spans residues 43-1407; that stretch reads WTLKNFPFPC…RPFLYTLRNS (1365 aa). Asn180 carries an N-linked (GlcNAc...) asparagine glycan. Active-site residues include Ser404 and Asp518. N-linked (GlcNAc...) asparagine glycosylation is found at Asn525, Asn626, and Asn637. His659 is an active-site residue. 10 N-linked (GlcNAc...) asparagine glycosylation sites follow: Asn715, Asn764, Asn787, Asn801, Asn830, Asn926, Asn1227, Asn1280, Asn1289, and Asn1387. Positions 1408 to 1450 are necessary for membrane localization; that stretch reads QLLPDKAEEPSNALYWAVPVAAIGGLAVGILGVMLWRTVKPVQ. A helical membrane pass occupies residues 1423-1443; sequence WAVPVAAIGGLAVGILGVMLW. Topologically, residues 1444–1478 are cytoplasmic; that stretch reads RTVKPVQQEEEEEDTLPNTSVTQDAVSEKRLKAGN. The disordered stretch occupies residues 1451-1478; sequence QEEEEEDTLPNTSVTQDAVSEKRLKAGN. Over residues 1459 to 1468 the composition is skewed to polar residues; the sequence is LPNTSVTQDA. A compositionally biased stretch (basic and acidic residues) spans 1469–1478; sequence VSEKRLKAGN.

This sequence belongs to the 'GDSL' lipolytic enzyme family. Phospholipase B1 subfamily. Post-translationally, undergoes proteolytic cleavage in the ileum.

It localises to the apical cell membrane. It catalyses the reaction a 1,2-diacyl-sn-glycero-3-phosphocholine + H2O = a 1-acyl-sn-glycero-3-phosphocholine + a fatty acid + H(+). It carries out the reaction a 1-O-alkyl-2-acyl-sn-glycero-3-phosphocholine + H2O = a 1-O-alkyl-sn-glycero-3-phosphocholine + a fatty acid + H(+). The catalysed reaction is a 1-acyl-sn-glycero-3-phosphocholine + H2O = sn-glycerol 3-phosphocholine + a fatty acid + H(+). The enzyme catalyses a triacylglycerol + H2O = a diacylglycerol + a fatty acid + H(+). It catalyses the reaction 1,2-dihexadecanoyl-sn-glycero-3-phosphocholine + H2O = 1-hexadecanoyl-sn-glycero-3-phosphocholine + hexadecanoate + H(+). It carries out the reaction 1-hexadecanoyl-2-(9Z-octadecenoyl)-sn-glycero-3-phosphocholine + H2O = 1-hexadecanoyl-sn-glycero-3-phosphocholine + (9Z)-octadecenoate + H(+). The catalysed reaction is 1,2-di-(9Z-octadecenoyl)-sn-glycero-3-phosphocholine + H2O = 1-(9Z-octadecenoyl)-sn-glycero-3-phosphocholine + (9Z)-octadecenoate + H(+). The enzyme catalyses 1-hexadecanoyl-2-(9Z,12Z-octadecadienoyl)-sn-glycero-3-phosphocholine + H2O = (9Z,12Z)-octadecadienoate + 1-hexadecanoyl-sn-glycero-3-phosphocholine + H(+). It catalyses the reaction 1-hexadecanoyl-2-(9Z,12Z-octadecadienoyl)-sn-glycero-3-phosphocholine + H2O = 2-(9Z,12Z-octadecadienoyl)-sn-glycero-3-phosphocholine + hexadecanoate + H(+). It carries out the reaction 1-hexadecanoyl-2-(9Z-octadecenoyl)-sn-glycero-3-phosphoethanolamine + H2O = 1-hexadecanoyl-sn-glycero-3-phosphoethanolamine + (9Z)-octadecenoate + H(+). The catalysed reaction is 1-hexadecanoyl-2-(9Z-octadecenoyl)-sn-glycero-3-phospho-(1'-sn-glycerol) + H2O = 1-hexadecanoyl-sn-glycero-3-phospho-(1'-sn-glycerol) + (9Z)-octadecenoate + H(+). The enzyme catalyses 1,2-dihexadecanoyl-sn-glycero-3-phosphocholine + 2 H2O = sn-glycerol 3-phosphocholine + 2 hexadecanoate + 2 H(+). It catalyses the reaction 1-O-hexadecyl-2-(9Z)-octadecenoyl-sn-glycero-3-phosphocholine + H2O = 1-O-hexadecyl-sn-glycero-3-phosphocholine + (9Z)-octadecenoate + H(+). It carries out the reaction 1-hexadecanoyl-sn-glycero-3-phosphocholine + H2O = sn-glycerol 3-phosphocholine + hexadecanoate + H(+). The catalysed reaction is 1,2,3-tri-(9Z-octadecenoyl)-glycerol + H2O = di-(9Z)-octadecenoylglycerol + (9Z)-octadecenoate + H(+). The enzyme catalyses 1-hexadecanoyl-2-(9Z)-octadecenoyl-3-octadecanoyl-sn-glycerol + H2O = 1-hexadecanoyl-2-(9Z-octadecenoyl)-sn-glycerol + octadecanoate + H(+). It catalyses the reaction 1,3-dihexadecanoyl-2-(9Z-octadecenoyl)glycerol + H2O = 1,3-dihexadecanoylglycerol + (9Z)-octadecenoate + H(+). It carries out the reaction 1,3-dihexadecanoyl-2-(9Z-octadecenoyl)glycerol + H2O = 1-hexadecanoyl-2-(9Z-octadecenoyl)-glycerol + hexadecanoate + H(+). The catalysed reaction is 1-hexadecanoyl-2-(9Z)-octadecenoyl-3-octadecanoyl-sn-glycerol + H2O = 1-hexadecanoyl-3-octadecanoyl-sn-glycerol + (9Z)-octadecenoate + H(+). The enzyme catalyses 1-hexadecanoyl-2-(9Z)-octadecenoyl-3-octadecanoyl-sn-glycerol + H2O = 2-(9Z-octadecenoyl)-3-octadecanoyl-sn-glycerol + hexadecanoate + H(+). It catalyses the reaction 1-octadecanoyl-2-(9Z,12Z)-octadecadienoyl-sn-glycerol + H2O = 1-octadecanoyl-sn-glycerol + (9Z,12Z)-octadecadienoate + H(+). It carries out the reaction 1,2-di-(9Z-octadecenoyl)-sn-glycerol + H2O = 1-(9Z-octadecenoyl)-sn-glycerol + (9Z)-octadecenoate + H(+). The catalysed reaction is 2,3-di-(9Z)-octadecenoyl-sn-glycerol + H2O = 3-(9Z-octadecenoyl)-sn-glycerol + (9Z)-octadecenoate + H(+). The enzyme catalyses 1,3-di-(9Z-octadecenoyl)-glycerol + H2O = 1-(9Z-octadecenoyl)-glycerol + (9Z)-octadecenoate + H(+). It catalyses the reaction 1-(9Z-octadecenoyl)-glycerol + H2O = glycerol + (9Z)-octadecenoate + H(+). It carries out the reaction 2-(9Z-octadecenoyl)-glycerol + H2O = glycerol + (9Z)-octadecenoate + H(+). Its function is as follows. Calcium-independent membrane-associated phospholipase that catalyzes complete diacylation of phospholipids by hydrolyzing both sn-1 and sn-2 fatty acyl chains attached to the glycerol backbone (phospholipase B activity). Has dual phospholipase and lysophospholipase activities toward diacylphospholipids. Preferentially cleaves sn-2 ester bonds over sn-1 bonds. Acts as a lipase toward glycerolipid substrates. Hydrolyzes fatty acyl chains of diacylglycerols with preference for the sn-2 position and of triacylglycerols with not positional selectivity. May also hydrolyze long chain retinyl esters such as retinyl palmitate. May contribute to digestion of dietary phospholipids, glycerolipids and retinoids, facilitating lipid absorption at the brush border. The polypeptide is Phospholipase B1, membrane-associated (Plb1) (Mus musculus (Mouse)).